The sequence spans 107 residues: uncharacterized protein (107 aa).

The protein localises to the mitochondrion. This is an uncharacterized protein from Arabidopsis thaliana (Mouse-ear cress).